We begin with the raw amino-acid sequence, 446 residues long: Ribosome biogenesis protein WDR12 homolog (446 aa).

The segment at 21-105 (VQITFFSKDK…ETILKIECII (85 aa)) is ubiquitin-like (UBL) domain. 2 WD repeats span residues 171–211 (KCSG…LVEK) and 216–255 (GHER…EATI). Positions 256–275 (YEKEEEESSAKKKRKKDTRT) are disordered. 4 WD repeats span residues 284-324 (GHRD…EVSR), 326-365 (KGPK…GAMV), 371-412 (GHQN…SSLF), and 416-446 (GHED…FETS).

Belongs to the WD repeat WDR12/YTM1 family.

It localises to the nucleus. It is found in the nucleolus. The protein resides in the nucleoplasm. Functionally, required for maturation of ribosomal RNAs and formation of the large ribosomal subunit. The chain is Ribosome biogenesis protein WDR12 homolog from Caenorhabditis briggsae.